Reading from the N-terminus, the 424-residue chain is CinA-like protein (424 aa).

Belongs to the CinA family.

The polypeptide is CinA-like protein (Prochlorococcus marinus (strain MIT 9312)).